We begin with the raw amino-acid sequence, 968 residues long: Phosphoenolpyruvate carboxylase 3 (968 aa).

Ser11 is modified (phosphoserine). Residues His173 and Lys603 contribute to the active site. Ser705 carries the post-translational modification Phosphoserine.

This sequence belongs to the PEPCase type 1 family. As to quaternary structure, homotetramer. Mg(2+) serves as cofactor. In terms of tissue distribution, expressed in roots and siliques, and to a lower extent in stems, leaves and flowers.

The protein resides in the cytoplasm. The enzyme catalyses oxaloacetate + phosphate = phosphoenolpyruvate + hydrogencarbonate. With respect to regulation, by light-reversible phosphorylation. Through the carboxylation of phosphoenolpyruvate (PEP) it forms oxaloacetate, a four-carbon dicarboxylic acid source for the tricarboxylic acid cycle. The chain is Phosphoenolpyruvate carboxylase 3 (PPC3) from Arabidopsis thaliana (Mouse-ear cress).